The chain runs to 803 residues: H(+)/Cl(-) exchange transporter 7 (803 aa).

Residues 1–46 (MANVSKKVSWSGRDRDDEEGAPLLRRTGQPDEETPLLNGAGPGARQ) form a disordered region. Topologically, residues 1-124 (MANVSKKVSW…TAFRTVEIKR (124 aa)) are cytoplasmic. At Ser-9 the chain carries Phosphoserine. Helical transmembrane passes span 125–157 (WVIC…YRVI) and 172–195 (FSLL…VAFI). A Selectivity filter part_1 motif is present at residues 201-205 (GSGIP). Ser-202 contributes to the chloride binding site. The helical intramembrane region spans 204–211 (IPQIKCFL). Helical transmembrane passes span 221–239 (RLKT…VVGG) and 245–262 (EGPM…ISQG). Residues 243-247 (GKEGP) carry the Selectivity filter part_2 motif. 2 consecutive intramembrane regions (helical) follow at residues 286 to 298 (FVSA…VSAA) and 302 to 310 (PVGGVLFSL). 5 helical membrane passes run 320–339 (FLTW…LNFV), 373–403 (IPVF…FRIR), 408–430 (PCLQ…FVLI), 485–505 (PMTL…TYGL), and 510–533 (GVFI…MSYL). The Selectivity filter part_3 signature appears at 510–514 (GVFIP). Phe-512 contacts chloride. The helical intramembrane region spans 543-557 (GKYALMGAAAQLGGI). Positions 558-560 (VRM) form an intramembrane region, note=Loop between two helices. The segment at residues 561–572 (TLSLTVIMMEAT) is an intramembrane region (helical). Residues 573–576 (SNVT) constitute an intramembrane region (note=Loop between two helices). A helical membrane pass occupies residues 577-595 (YGFPIMLVLMTAKIVGDVF). The Cytoplasmic portion of the chain corresponds to 596 to 803 (IEGLYDMHIQ…GLEELSLAQT (208 aa)). Tyr-600 is a binding site for chloride. CBS domains are found at residues 629-693 (MSTP…VFVE) and 739-797 (MNPS…GLEE). ATP-binding positions include 656–658 (HNG) and 781–784 (TRKD). Position 799 is a phosphoserine (Ser-799).

The protein belongs to the chloride channel (TC 2.A.49) family. ClC-7/CLCN7 subfamily. In terms of assembly, chloride channel 7 are heteromers of alpha (CLCN7) and beta (OSTM1) subunits. Brain, testis, muscle and kidney.

The protein resides in the lysosome membrane. The catalysed reaction is 2 chloride(in) + H(+)(out) = 2 chloride(out) + H(+)(in). In terms of biological role, slowly voltage-gated channel mediating the exchange of chloride ions against protons. Functions as antiporter and contributes to the acidification of the lysosome lumen and may be involved in maintaining lysosomal pH. The CLC channel family contains both chloride channels and proton-coupled anion transporters that exchange chloride or another anion for protons. The presence of conserved gating glutamate residues is typical for family members that function as antiporters. This is H(+)/Cl(-) exchange transporter 7 (Clcn7) from Rattus norvegicus (Rat).